The chain runs to 224 residues: Octanoyltransferase (224 aa).

The BPL/LPL catalytic domain occupies 38-213 (SATVDELWWV…YLVRRLGYSA (176 aa)). Substrate-binding positions include 77–84 (RGGQVTYH), 144–146 (SLG), and 157–159 (GLS). Cys175 serves as the catalytic Acyl-thioester intermediate.

The protein belongs to the LipB family.

The protein resides in the cytoplasm. The enzyme catalyses octanoyl-[ACP] + L-lysyl-[protein] = N(6)-octanoyl-L-lysyl-[protein] + holo-[ACP] + H(+). The protein operates within protein modification; protein lipoylation via endogenous pathway; protein N(6)-(lipoyl)lysine from octanoyl-[acyl-carrier-protein]: step 1/2. Its function is as follows. Catalyzes the transfer of endogenously produced octanoic acid from octanoyl-acyl-carrier-protein onto the lipoyl domains of lipoate-dependent enzymes. Lipoyl-ACP can also act as a substrate although octanoyl-ACP is likely to be the physiological substrate. The polypeptide is Octanoyltransferase (Nitrosococcus oceani (strain ATCC 19707 / BCRC 17464 / JCM 30415 / NCIMB 11848 / C-107)).